Reading from the N-terminus, the 200-residue chain is Cuticle protein 19.8 (200 aa).

A run of 3 repeats spans residues 20 to 23 (AAPA), 26 to 29 (AAPA), and 43 to 46 (AAPA). The Chitin-binding type R&amp;R domain maps to 56 to 127 (HPQYSYGYSV…EPGVHAPIAA (72 aa)). Positions 70-89 (TGDSKSQQESRDGDVVQGSY) are disordered. 5 consecutive repeat copies span residues 126 to 129 (AAPV), 144 to 147 (AAPA), 150 to 153 (AAPV), 159 to 162 (AAPA), and 177 to 180 (AAPA).

Functionally, component of the cuticle of migratory locust which contains more than 100 different structural proteins. This is Cuticle protein 19.8 from Locusta migratoria (Migratory locust).